A 438-amino-acid polypeptide reads, in one-letter code: Ribosomal protein uS12 methylthiotransferase RimO (438 aa).

One can recognise an MTTase N-terminal domain in the interval 4 to 114; the sequence is PRVSFVSLGC…VMNAVHEVAP (111 aa). [4Fe-4S] cluster is bound by residues cysteine 13, cysteine 49, cysteine 78, cysteine 146, cysteine 150, and cysteine 153. The 239-residue stretch at 132–370 folds into the Radical SAM core domain; it reads LTPRHYAYLK…MAKQQQISTN (239 aa). A TRAM domain is found at 373-438; the sequence is KKKVGKRLPV…DAYDLHGTAV (66 aa).

It belongs to the methylthiotransferase family. RimO subfamily. Requires [4Fe-4S] cluster as cofactor.

It is found in the cytoplasm. The catalysed reaction is L-aspartate(89)-[ribosomal protein uS12]-hydrogen + (sulfur carrier)-SH + AH2 + 2 S-adenosyl-L-methionine = 3-methylsulfanyl-L-aspartate(89)-[ribosomal protein uS12]-hydrogen + (sulfur carrier)-H + 5'-deoxyadenosine + L-methionine + A + S-adenosyl-L-homocysteine + 2 H(+). Catalyzes the methylthiolation of an aspartic acid residue of ribosomal protein uS12. The polypeptide is Ribosomal protein uS12 methylthiotransferase RimO (Brucella ovis (strain ATCC 25840 / 63/290 / NCTC 10512)).